Here is a 187-residue protein sequence, read N- to C-terminus: 1,6-anhydro-N-acetylmuramyl-L-alanine amidase AmpD (187 aa).

The region spanning serine 29–proline 167 is the N-acetylmuramoyl-L-alanine amidase domain. Histidine 34 lines the Zn(2+) pocket. Glutamate 116 (proton acceptor) is an active-site residue. Residues histidine 154 and aspartate 164 each contribute to the Zn(2+) site.

The protein belongs to the N-acetylmuramoyl-L-alanine amidase 2 family. It depends on Zn(2+) as a cofactor.

The protein localises to the cytoplasm. It carries out the reaction Hydrolyzes the link between N-acetylmuramoyl residues and L-amino acid residues in certain cell-wall glycopeptides.. Functionally, involved in cell wall peptidoglycan recycling. Specifically cleaves the amide bond between the lactyl group of N-acetylmuramic acid and the alpha-amino group of the L-alanine in degradation products containing an anhydro N-acetylmuramyl moiety. The sequence is that of 1,6-anhydro-N-acetylmuramyl-L-alanine amidase AmpD (ampD) from Salmonella typhimurium (strain LT2 / SGSC1412 / ATCC 700720).